We begin with the raw amino-acid sequence, 186 residues long: Peptide deformylase 2 (186 aa).

The Fe cation site is built by Cys-104 and His-146. Residue Glu-147 is part of the active site. A Fe cation-binding site is contributed by His-150.

This sequence belongs to the polypeptide deformylase family. Fe(2+) serves as cofactor.

It catalyses the reaction N-terminal N-formyl-L-methionyl-[peptide] + H2O = N-terminal L-methionyl-[peptide] + formate. In terms of biological role, removes the formyl group from the N-terminal Met of newly synthesized proteins. Requires at least a dipeptide for an efficient rate of reaction. N-terminal L-methionine is a prerequisite for activity but the enzyme has broad specificity at other positions. This is Peptide deformylase 2 from Streptomyces avermitilis (strain ATCC 31267 / DSM 46492 / JCM 5070 / NBRC 14893 / NCIMB 12804 / NRRL 8165 / MA-4680).